Here is a 118-residue protein sequence, read N- to C-terminus: Large ribosomal subunit protein bL20 (118 aa).

Belongs to the bacterial ribosomal protein bL20 family.

Functionally, binds directly to 23S ribosomal RNA and is necessary for the in vitro assembly process of the 50S ribosomal subunit. It is not involved in the protein synthesizing functions of that subunit. The protein is Large ribosomal subunit protein bL20 of Psychrobacter arcticus (strain DSM 17307 / VKM B-2377 / 273-4).